Reading from the N-terminus, the 446-residue chain is Tubulin gamma chain (446 aa).

Position 142-148 (142-148) interacts with GTP; sequence AGGTGSG.

The protein belongs to the tubulin family.

The protein localises to the cytoplasm. It is found in the cytoskeleton. The protein resides in the microtubule organizing center. Its subcellular location is the spindle pole body. Tubulin is the major constituent of microtubules. The gamma chain is found at microtubule organizing centers (MTOC) such as the spindle poles or the centrosome, suggesting that it is involved in the minus-end nucleation of microtubule assembly. The sequence is that of Tubulin gamma chain (tug1) from Schizosaccharomyces japonicus (Fission yeast).